Here is a 293-residue protein sequence, read N- to C-terminus: Formamidopyrimidine-DNA glycosylase (293 aa).

The active-site Schiff-base intermediate with DNA is P2. The active-site Proton donor is the E3. K58 acts as the Proton donor; for beta-elimination activity in catalysis. Residues H104, R123, and K166 each contribute to the DNA site. The FPG-type zinc-finger motif lies at 257–293 (QVYDREGEPCRTDGCEGVVKRFVQNGRSTFWCPKCQR). The Proton donor; for delta-elimination activity role is filled by R283.

The protein belongs to the FPG family. As to quaternary structure, monomer. Zn(2+) serves as cofactor.

The enzyme catalyses Hydrolysis of DNA containing ring-opened 7-methylguanine residues, releasing 2,6-diamino-4-hydroxy-5-(N-methyl)formamidopyrimidine.. It carries out the reaction 2'-deoxyribonucleotide-(2'-deoxyribose 5'-phosphate)-2'-deoxyribonucleotide-DNA = a 3'-end 2'-deoxyribonucleotide-(2,3-dehydro-2,3-deoxyribose 5'-phosphate)-DNA + a 5'-end 5'-phospho-2'-deoxyribonucleoside-DNA + H(+). Its function is as follows. Involved in base excision repair of DNA damaged by oxidation or by mutagenic agents. Acts as a DNA glycosylase that recognizes and removes damaged bases. Has a preference for oxidized purines, such as 7,8-dihydro-8-oxoguanine (8-oxoG). Has AP (apurinic/apyrimidinic) lyase activity and introduces nicks in the DNA strand. Cleaves the DNA backbone by beta-delta elimination to generate a single-strand break at the site of the removed base with both 3'- and 5'-phosphates. This chain is Formamidopyrimidine-DNA glycosylase, found in Bradyrhizobium sp. (strain ORS 278).